The following is a 273-amino-acid chain: DNA repair protein RecO (273 aa).

Residues 250–273 form a disordered region; that stretch reads NVGQNPSGKDDLNERRDVDGTGES. Basic and acidic residues predominate over residues 257 to 273; sequence GKDDLNERRDVDGTGES.

Belongs to the RecO family.

Involved in DNA repair and RecF pathway recombination. The polypeptide is DNA repair protein RecO (Desulfitobacterium hafniense (strain Y51)).